The chain runs to 406 residues: Sensor histidine kinase YxjM (406 aa).

Residues 1 to 13 (MNGQTPARHYYKK) lie on the Cytoplasmic side of the membrane. A helical transmembrane segment spans residues 14 to 34 (LVPSLILILNCIQFLSHPTKA). Over 35-36 (DP) the chain is Extracellular. A helical transmembrane segment spans residues 37-57 (ILLAFVFAVYLAFIWIIPYVA). Position 58 (serine 58) is a topological domain, cytoplasmic. 2 helical membrane passes run 59 to 79 (TAVSLSIFIGLWLLTDFFWAV) and 80 to 100 (SGQEQGAAYFLIVFLMIYAAF). Residue arginine 101 is a topological domain, cytoplasmic. Residues 102 to 122 (LPSRLSLIFTACLIGGNILLL) traverse the membrane as a helical segment. At 123-125 (SSQ) the chain is on the extracellular side. The helical transmembrane segment at 126 to 146 (GGSLNTIISNISIMLGLYVLF) threads the bilayer. At 147-406 (SSMRFRREAR…TNKEQKDEQR (260 aa)) the chain is on the cytoplasmic side. One can recognise a Histidine kinase domain in the interval 209 to 396 (DIHDSIGHEL…KIELSLPLMT (188 aa)). Histidine 211 bears the Phosphohistidine; by autocatalysis mark.

It localises to the cell membrane. The enzyme catalyses ATP + protein L-histidine = ADP + protein N-phospho-L-histidine.. Probable member of the two-component regulatory system YxjM/YxjL. May activate YxjL by phosphorylation. In Bacillus subtilis (strain 168), this protein is Sensor histidine kinase YxjM (yxjM).